The chain runs to 302 residues: Mediator of RNA polymerase II transcription subunit 6 (302 aa).

Residues 260–281 form a disordered region; the sequence is ATGQTGATSRFENGSSRSSTDA.

This sequence belongs to the Mediator complex subunit 6 family. Component of the Mediator complex.

Its subcellular location is the nucleus. Functionally, component of the Mediator complex, a coactivator involved in the regulated transcription of nearly all RNA polymerase II-dependent genes. Mediator functions as a bridge to convey information from gene-specific regulatory proteins to the basal RNA polymerase II transcription machinery. Mediator is recruited to promoters by direct interactions with regulatory proteins and serves as a scaffold for the assembly of a functional preinitiation complex with RNA polymerase II and the general transcription factors. The chain is Mediator of RNA polymerase II transcription subunit 6 (MED6) from Candida glabrata (strain ATCC 2001 / BCRC 20586 / JCM 3761 / NBRC 0622 / NRRL Y-65 / CBS 138) (Yeast).